We begin with the raw amino-acid sequence, 1090 residues long: Leucine--tRNA ligase, cytoplasmic (1090 aa).

N-acetylserine is present on serine 2. Residues 66-76 (PYMNGVMHAGH) carry the 'HIGH' region motif. The residue at position 142 (threonine 142) is a Phosphothreonine. Residues 729–733 (KMSKS) carry the 'KMSKS' region motif. Lysine 732 is an ATP binding site.

Belongs to the class-I aminoacyl-tRNA synthetase family.

The protein resides in the cytoplasm. It catalyses the reaction tRNA(Leu) + L-leucine + ATP = L-leucyl-tRNA(Leu) + AMP + diphosphate. This chain is Leucine--tRNA ligase, cytoplasmic (CDC60), found in Saccharomyces cerevisiae (strain ATCC 204508 / S288c) (Baker's yeast).